A 218-amino-acid polypeptide reads, in one-letter code: Large ribosomal subunit protein eL14 (218 aa).

Lys-79 bears the N6-acetyllysine mark. Residue Lys-85 is modified to N6-acetyllysine; alternate. Residue Lys-85 is modified to N6-succinyllysine; alternate. Lys-124 is covalently cross-linked (Glycyl lysine isopeptide (Lys-Gly) (interchain with G-Cter in SUMO2)). Ser-139 carries the phosphoserine modification. The tract at residues 159–218 is disordered; the sequence is VPAKKATAAGKKAAAQKAPAQKAPAQKAAGQKAAQPPKAQKGQKPPAQKAPAPKASGKKA. 6 repeat units span residues 174–178, 179–183, 184–188, 189–193, 196–198, and 199–201. A 4 X 5 AA tandem repeats of Q-K-A-[PAS]-X region spans residues 174–193; it reads QKAPAQKAPAQKAAGQKAAQ. Residues 196–201 form a 2 X 3 AA tandem repeats of K-[GA]-Q region; it reads KAQKGQ. Lys-207 is modified (N6-succinyllysine).

It belongs to the eukaryotic ribosomal protein eL14 family. In terms of assembly, component of the large ribosomal subunit.

It localises to the cytoplasm. Functionally, component of the large ribosomal subunit. The ribosome is a large ribonucleoprotein complex responsible for the synthesis of proteins in the cell. The protein is Large ribosomal subunit protein eL14 (RPL14) of Oryctolagus cuniculus (Rabbit).